Consider the following 360-residue polypeptide: Phospho-N-acetylmuramoyl-pentapeptide-transferase (360 aa).

The next 10 membrane-spanning stretches (helical) occupy residues 27–47 (ILSV…MIRM), 73–93 (TMGG…WGDL), 97–117 (FVWI…VDDW), 132–152 (WKYL…FFTA), 164–184 (FFKS…YFVI), 199–219 (GLAI…AYAG), 236–256 (AGEL…FLWF), 263–283 (VFMG…MAVI), 288–308 (IVLF…MLQV), and 337–357 (KIIV…LATL).

The protein belongs to the glycosyltransferase 4 family. MraY subfamily. Mg(2+) is required as a cofactor.

Its subcellular location is the cell inner membrane. The enzyme catalyses UDP-N-acetyl-alpha-D-muramoyl-L-alanyl-gamma-D-glutamyl-meso-2,6-diaminopimeloyl-D-alanyl-D-alanine + di-trans,octa-cis-undecaprenyl phosphate = di-trans,octa-cis-undecaprenyl diphospho-N-acetyl-alpha-D-muramoyl-L-alanyl-D-glutamyl-meso-2,6-diaminopimeloyl-D-alanyl-D-alanine + UMP. It functions in the pathway cell wall biogenesis; peptidoglycan biosynthesis. Its function is as follows. Catalyzes the initial step of the lipid cycle reactions in the biosynthesis of the cell wall peptidoglycan: transfers peptidoglycan precursor phospho-MurNAc-pentapeptide from UDP-MurNAc-pentapeptide onto the lipid carrier undecaprenyl phosphate, yielding undecaprenyl-pyrophosphoryl-MurNAc-pentapeptide, known as lipid I. This chain is Phospho-N-acetylmuramoyl-pentapeptide-transferase, found in Alcanivorax borkumensis (strain ATCC 700651 / DSM 11573 / NCIMB 13689 / SK2).